A 913-amino-acid chain; its full sequence is Valine--tRNA ligase (913 aa).

A 'HIGH' region motif is present at residues 49–59 (PNVTGNLHLGH). Positions 544-548 (KMSKS) match the 'KMSKS' region motif. K547 contributes to the ATP binding site. A coiled-coil region spans residues 851-912 (DWVKKQQKRL…ERLEGVLAQL (62 aa)).

The protein belongs to the class-I aminoacyl-tRNA synthetase family. ValS type 1 subfamily. As to quaternary structure, monomer.

Its subcellular location is the cytoplasm. It catalyses the reaction tRNA(Val) + L-valine + ATP = L-valyl-tRNA(Val) + AMP + diphosphate. Functionally, catalyzes the attachment of valine to tRNA(Val). As ValRS can inadvertently accommodate and process structurally similar amino acids such as threonine, to avoid such errors, it has a 'posttransfer' editing activity that hydrolyzes mischarged Thr-tRNA(Val) in a tRNA-dependent manner. The sequence is that of Valine--tRNA ligase from Deinococcus radiodurans (strain ATCC 13939 / DSM 20539 / JCM 16871 / CCUG 27074 / LMG 4051 / NBRC 15346 / NCIMB 9279 / VKM B-1422 / R1).